The chain runs to 309 residues: Methionyl-tRNA formyltransferase (309 aa).

Residue 107–110 (SLLP) participates in (6S)-5,6,7,8-tetrahydrofolate binding.

Belongs to the Fmt family.

It carries out the reaction L-methionyl-tRNA(fMet) + (6R)-10-formyltetrahydrofolate = N-formyl-L-methionyl-tRNA(fMet) + (6S)-5,6,7,8-tetrahydrofolate + H(+). Attaches a formyl group to the free amino group of methionyl-tRNA(fMet). The formyl group appears to play a dual role in the initiator identity of N-formylmethionyl-tRNA by promoting its recognition by IF2 and preventing the misappropriation of this tRNA by the elongation apparatus. This Borrelia recurrentis (strain A1) protein is Methionyl-tRNA formyltransferase.